Here is a 244-residue protein sequence, read N- to C-terminus: Probable transcriptional regulatory protein XfasM23_0940 (244 aa).

Belongs to the TACO1 family.

The protein resides in the cytoplasm. The sequence is that of Probable transcriptional regulatory protein XfasM23_0940 from Xylella fastidiosa (strain M23).